Consider the following 257-residue polypeptide: NAD-capped RNA hydrolase NudC (257 aa).

Residues lysine 25 and arginine 69 each coordinate substrate. Zn(2+) contacts are provided by cysteine 98 and cysteine 101. Glutamate 111 contacts substrate. 2 residues coordinate Zn(2+): cysteine 116 and cysteine 119. Tyrosine 124 serves as a coordination point for substrate. Residues 125–248 (PQIAPCIIVA…TVARRLIEDT (124 aa)) form the Nudix hydrolase domain. The a divalent metal cation site is built by alanine 158, glutamate 174, and glutamate 178. Positions 159 to 180 (GFVEVGETLEQAVAREVMEESG) match the Nudix box motif. Residue 192–199 (QPWPFPQS) participates in substrate binding. An a divalent metal cation-binding site is contributed by glutamate 219. Alanine 241 is a substrate binding site.

Belongs to the Nudix hydrolase family. NudC subfamily. In terms of assembly, homodimer. Mg(2+) is required as a cofactor. It depends on Mn(2+) as a cofactor. The cofactor is Zn(2+).

It catalyses the reaction a 5'-end NAD(+)-phospho-ribonucleoside in mRNA + H2O = a 5'-end phospho-adenosine-phospho-ribonucleoside in mRNA + beta-nicotinamide D-ribonucleotide + 2 H(+). The catalysed reaction is NAD(+) + H2O = beta-nicotinamide D-ribonucleotide + AMP + 2 H(+). It carries out the reaction NADH + H2O = reduced beta-nicotinamide D-ribonucleotide + AMP + 2 H(+). Functionally, mRNA decapping enzyme that specifically removes the nicotinamide adenine dinucleotide (NAD) cap from a subset of mRNAs by hydrolyzing the diphosphate linkage to produce nicotinamide mononucleotide (NMN) and 5' monophosphate mRNA. The NAD-cap is present at the 5'-end of some mRNAs and stabilizes RNA against 5'-processing. Has preference for mRNAs with a 5'-end purine. Catalyzes the hydrolysis of a broad range of dinucleotide pyrophosphates. The polypeptide is NAD-capped RNA hydrolase NudC (Shigella flexneri).